A 639-amino-acid chain; its full sequence is Lipoteichoic acid synthase 1 (639 aa).

Residues 1 to 3 (MKK) are Cytoplasmic-facing. The helical transmembrane segment at 4–24 (LFSYKLSFFVLAVILFWAKTY) threads the bilayer. Residues 25-41 (LSYKTEFNLGVKGTTQE) are Extracellular-facing. Residues 42–62 (ILLIFNPFSSAVFFLGLALLA) form a helical membrane-spanning segment. Residues 63 to 67 (KGRKS) are Cytoplasmic-facing. A helical membrane pass occupies residues 68–88 (AIIMLIIDFLMTFVLYANILF). Residues 89–116 (YRFFDDFLTFPNIKQSGNVGNMGDGIFS) are Extracellular-facing. A helical transmembrane segment spans residues 117-137 (IMAGHDIFYFLDIIILIAVLI). The Cytoplasmic segment spans residues 138-150 (WRPELKEYKMKKR). A helical membrane pass occupies residues 151 to 171 (FASLVILSGIALFFINLHYAE). Topologically, residues 172-639 (KDRPQLLTRT…YHYGKEKEIK (468 aa)) are extracellular. Mn(2+)-binding residues include glutamate 252 and threonine 297. Threonine 297 is an active-site residue. Histidine 413 is a binding site for substrate. Mn(2+) is bound by residues aspartate 472 and histidine 473.

Belongs to the LTA synthase family. Proteolytically cleaved by the type I signal peptidases SipT and SipV.

The protein localises to the cell membrane. Its subcellular location is the secreted. It participates in cell wall biogenesis; lipoteichoic acid biosynthesis. Its function is as follows. Catalyzes the polymerization of lipoteichoic acid (LTA) polyglycerol phosphate, a reaction that presumably uses phosphatidylglycerol (PG) as substrate. This is Lipoteichoic acid synthase 1 (ltaS1) from Bacillus subtilis (strain 168).